A 92-amino-acid chain; its full sequence is Large ribosomal subunit protein eL42 (92 aa).

The Zn(2+) site is built by Cys-11, Cys-14, Cys-70, and Cys-73. Residues 11–73 (CPNCRKHTVH…LDLRLKCKEC (63 aa)) form a C4-type zinc finger.

Belongs to the eukaryotic ribosomal protein eL42 family. In terms of assembly, part of the 50S ribosomal subunit. The cofactor is Zn(2+).

In terms of biological role, binds to the 23S rRNA. This Methanothermobacter thermautotrophicus (strain ATCC 29096 / DSM 1053 / JCM 10044 / NBRC 100330 / Delta H) (Methanobacterium thermoautotrophicum) protein is Large ribosomal subunit protein eL42.